The sequence spans 249 residues: Short-chain dehydrogenase virB (249 aa).

Ile16, Arg104, Tyr150, Lys154, Val183, and Thr185 together coordinate NADP(+). The active-site Proton donor is Tyr150. Residue Lys154 is the Lowers pKa of active site Tyr of the active site.

This sequence belongs to the short-chain dehydrogenases/reductases (SDR) family.

It functions in the pathway secondary metabolite biosynthesis. Short-chain dehydrogenase; part of the gene cluster that mediates the biosynthesis of virensols and trichoxide, fungal natural products that contain or are derived from a salicylaldehyde core. The pathway begins with the synthesis of the reduced chain in virensol C by the highly reducing polyketide synthase virA via condensation of one acetate and 8 malonate units. VirA has interesting programming rules since the first 2 ketides are fully reduced, the 3 following ketides undergo beta-dehydration, and the last 3 ketides are only reduced to beta-hydroxys to yield the trihydroxy portion. The production of aldehyde virensol C by virA alone is surprising, since virA does not contain a reductase (R) domain that is typically associated with reductive product release in HRPKS. The cupin-domain enzyme virC is involved in enhancing virA product turnover. The short-chain dehydrogenase virB then oxidizes the C-7 alcohol of virensol C to a ketone, yielding virensol D. Virensol D is further transformed to salicylaldehyde 5-deoxyaurocitrin by the short-chain dehydrogenase virD. VirD catalyzes the dehydrogenation of C-3 to form the beta-ketone aldehyde, which is followed by the generation of the nucleophilic C-2 that is required for the intramolecular aldol condensation between C-2 and C-7, itself followed by dehydration and aromatization which leads to salicylaldehyde 5-deoxyaurocitrin. While the dehydrogenation of virensol D is definitely catalyzed by virD, the aldol condensation and dehydration may be uncatalyzed or assisted by virD. The short chain dehydrogenase virG then converts salicylaldehyde 5-deoxyaurocitrin into virensol B which is further hydroxylated by the cytochrome P450 monooxygenase virE to yield the hydroquinone virensol A. VirI then may oxidize virensol A to form the quinone, while virH performs the epoxidation. Finally, the two remaining short-chain dehydrogenases, virK and virL, are probably responsible for reducing the ketones to the corresponding alcohols to furnish the epoxycyclohexanol structure in trichoxide. In Hypocrea virens (strain Gv29-8 / FGSC 10586) (Gliocladium virens), this protein is Short-chain dehydrogenase virB.